An 83-amino-acid polypeptide reads, in one-letter code: UPF0248 protein PYRAB10580 (83 aa).

This sequence belongs to the UPF0248 family.

The chain is UPF0248 protein PYRAB10580 from Pyrococcus abyssi (strain GE5 / Orsay).